Reading from the N-terminus, the 569-residue chain is uncharacterized protein (569 aa).

Residues 2-22 (VVIAALLGSLAVLAFLFYLWY) traverse the membrane as a helical segment.

The protein resides in the membrane. This is an uncharacterized protein from Mycoplasma pneumoniae (strain ATCC 29342 / M129 / Subtype 1) (Mycoplasmoides pneumoniae).